A 398-amino-acid chain; its full sequence is Nicotinate phosphoribosyltransferase (398 aa).

Histidine 222 bears the Phosphohistidine; by autocatalysis mark.

This sequence belongs to the NAPRTase family. In terms of processing, transiently phosphorylated on a His residue during the reaction cycle. Phosphorylation strongly increases the affinity for substrates and increases the rate of nicotinate D-ribonucleotide production. Dephosphorylation regenerates the low-affinity form of the enzyme, leading to product release.

It catalyses the reaction nicotinate + 5-phospho-alpha-D-ribose 1-diphosphate + ATP + H2O = nicotinate beta-D-ribonucleotide + ADP + phosphate + diphosphate. It functions in the pathway cofactor biosynthesis; NAD(+) biosynthesis; nicotinate D-ribonucleotide from nicotinate: step 1/1. Its function is as follows. Catalyzes the synthesis of beta-nicotinate D-ribonucleotide from nicotinate and 5-phospho-D-ribose 1-phosphate at the expense of ATP. This chain is Nicotinate phosphoribosyltransferase, found in Acidovorax ebreus (strain TPSY) (Diaphorobacter sp. (strain TPSY)).